Here is a 496-residue protein sequence, read N- to C-terminus: E3 ubiquitin-protein ligase XIAP (496 aa).

BIR repeat units follow at residues 26-93 (EFNR…CRFI), 163-230 (EEAR…CFFV), and 264-329 (YDAR…CKYL). Cysteine 299, cysteine 302, and histidine 319 together coordinate Zn(2+). A Glycyl lysine isopeptide (Lys-Gly) (interchain with G-Cter in ubiquitin) cross-link involves residue lysine 321. Cysteine 326 provides a ligand contact to Zn(2+). Lysine 327 is covalently cross-linked (Glycyl lysine isopeptide (Lys-Gly) (interchain with G-Cter in ubiquitin)). Cysteine 449 is subject to S-nitrosocysteine. An RING-type zinc finger spans residues 449–484 (CKICMDRNIAIVFVPCGHLVTCKQCAEAVDKCPMCC).

Belongs to the IAP family. In terms of assembly, monomer, and homodimer. Interacts (via BIR3 domain) with DIABLO/SMAC; the interaction inhibits apoptotic suppressor activity. Interacts with HTRA2/PRSS25; the interaction inhibits apoptotic suppressor activity. Interacts with TAB1/MAP3K7IP1 and AIFM1. Interaction with DIABLO/SMAC hinders binding of TAB1/MAP3K7IP1 and AIFM1. Interacts with TCF25 and COMMD1. Interacts (via BIR3 domain) with SEPTIN4. Interacts with RIP1, RIP2, RIP3, RIP4, CCS and USP19. Interacts (via BIR 2 domain and BIR 3 domain) with HAX1 (via C-terminus) and this interaction blocks ubiquitination of XIAP/BIRC4. Interacts with the monomeric form of BIRC5/survivin. Interacts with TLE3 and TCF7L2/TCF4. Interacts (via BIR 3 and RING domains) with PDCL3. S-Nitrosylation down-regulates its E3 ubiquitin-protein ligase activity. In terms of processing, autoubiquitinated. Ubiquitinated by TRIM32; leading to proteasomal degradation.

Its subcellular location is the cytoplasm. The protein localises to the nucleus. The enzyme catalyses S-ubiquitinyl-[E2 ubiquitin-conjugating enzyme]-L-cysteine + [acceptor protein]-L-lysine = [E2 ubiquitin-conjugating enzyme]-L-cysteine + N(6)-ubiquitinyl-[acceptor protein]-L-lysine.. In terms of biological role, multi-functional protein which regulates not only caspases and apoptosis, but also modulates inflammatory signaling and immunity, copper homeostasis, mitogenic kinase signaling, cell proliferation, as well as cell invasion and metastasis. Acts as a direct caspase inhibitor. Directly bind to the active site pocket of CASP3 and CASP7 and obstructs substrate entry. Inactivates CASP9 by keeping it in a monomeric, inactive state. Acts as an E3 ubiquitin-protein ligase regulating NF-kappa-B signaling and the target proteins for its E3 ubiquitin-protein ligase activity include: RIPK1, RIPK2, MAP3K2/MEKK2, DIABLO/SMAC, AIFM1, CCS, PTEN and BIRC5/survivin. Acts as an important regulator of innate immunity by mediating 'Lys-63'-linked polyubiquitination of RIPK2 downstream of NOD1 and NOD2, thereby transforming RIPK2 into a scaffolding protein for downstream effectors, ultimately leading to activation of the NF-kappa-B and MAP kinases signaling. 'Lys-63'-linked polyubiquitination of RIPK2 also promotes recruitment of the LUBAC complex to RIPK2. Regulates the BMP signaling pathway and the SMAD and MAP3K7/TAK1 dependent pathways leading to NF-kappa-B and JNK activation. Ubiquitination of CCS leads to enhancement of its chaperone activity toward its physiologic target, SOD1, rather than proteasomal degradation. Ubiquitination of MAP3K2/MEKK2 and AIFM1 does not lead to proteasomal degradation. Plays a role in copper homeostasis by ubiquitinating COMMD1 and promoting its proteasomal degradation. Can also function as E3 ubiquitin-protein ligase of the NEDD8 conjugation pathway, targeting effector caspases for neddylation and inactivation. Ubiquitinates and therefore mediates the proteasomal degradation of BCL2 in response to apoptosis. Protects cells from spontaneous formation of the ripoptosome, a large multi-protein complex that has the capability to kill cancer cells in a caspase-dependent and caspase-independent manner. Suppresses ripoptosome formation by ubiquitinating RIPK1 and CASP8. Acts as a positive regulator of Wnt signaling and ubiquitinates TLE1, TLE2, TLE3, TLE4 and AES. Ubiquitination of TLE3 results in inhibition of its interaction with TCF7L2/TCF4 thereby allowing efficient recruitment and binding of the transcriptional coactivator beta-catenin to TCF7L2/TCF4 that is required to initiate a Wnt-specific transcriptional program. The sequence is that of E3 ubiquitin-protein ligase XIAP (Xiap) from Rattus norvegicus (Rat).